We begin with the raw amino-acid sequence, 274 residues long: Dehydration-responsive element-binding protein 2A (274 aa).

Basic and acidic residues-rich tracts occupy residues methionine 1 to aspartate 10 and lysine 35 to serine 50. Residues methionine 1 to alanine 75 form a disordered region. A DNA-binding region (AP2/ERF) is located at residues alanine 75–alanine 132.

This sequence belongs to the AP2/ERF transcription factor family. ERF subfamily.

The protein resides in the nucleus. In terms of biological role, transcriptional activator that binds specifically to the DNA sequence 5'-[AG]CCGAC-3' of the cis-acting dehydration-responsive element (DRE). Binding to the C-repeat/DRE element mediates high salinity- and dehydration-inducible transcription. This is Dehydration-responsive element-binding protein 2A (DREB2A) from Oryza sativa subsp. japonica (Rice).